Consider the following 494-residue polypeptide: Neuronal pentraxin receptor (494 aa).

The Cytoplasmic portion of the chain corresponds to 1-2 (MK). The helical; Signal-anchor for type II membrane protein transmembrane segment at 3-23 (FLAVLLAAGMLAFLGAVICII) threads the bilayer. The Extracellular portion of the chain corresponds to 24-494 (ASVPLAASPA…FDVCKRRAKA (471 aa)). The interval 37-80 (PGGTDNASAASAAGAPGPQRSLSALQGAGGSAGPSVLPGEPAAS) is disordered. The N-linked (GlcNAc...) asparagine glycan is linked to Asn42. Composition is skewed to low complexity over residues 43 to 62 (ASAASAAGAPGPQRSLSALQ) and 69 to 80 (GPSVLPGEPAAS). Asn211 carries an N-linked (GlcNAc...) asparagine glycan. Positions 286–488 (DAFKVSIPIR…GAKKAAFDVC (203 aa)) constitute a Pentraxin (PTX) domain. A disulfide bond links Cys316 and Cys377. 5 residues coordinate Ca(2+): Asn341, Glu419, Gln420, Asp421, and Gln431. Residue Asn457 is glycosylated (N-linked (GlcNAc...) asparagine).

In terms of assembly, interacts with KLHL2. Heteropentamer with NPTX1 and/or NPTX2. Also binds taipoxin-associated calcium-binding protein 49 (TCBP49/RCN2). The cofactor is Ca(2+). Post-translationally, N-glycosylated. In terms of processing, ubiquitinated by a cullin-RING-based BCR (BTB-CUL3-RBX1) E3 ubiquitin-protein ligase complex containing KLHL2. In terms of tissue distribution, brain specific.

It localises to the membrane. In terms of biological role, may be involved in mediating uptake of synaptic material during synapse remodeling or in mediating the synaptic clustering of AMPA glutamate receptors at a subset of excitatory synapses. The chain is Neuronal pentraxin receptor (Nptxr) from Rattus norvegicus (Rat).